We begin with the raw amino-acid sequence, 323 residues long: o-succinylbenzoate synthase (323 aa).

Catalysis depends on Lys134, which acts as the Proton donor. Residues Asp162, Glu191, and Asp214 each contribute to the Mg(2+) site. Lys236 acts as the Proton acceptor in catalysis.

The protein belongs to the mandelate racemase/muconate lactonizing enzyme family. MenC type 1 subfamily. A divalent metal cation is required as a cofactor.

The enzyme catalyses (1R,6R)-6-hydroxy-2-succinyl-cyclohexa-2,4-diene-1-carboxylate = 2-succinylbenzoate + H2O. The protein operates within quinol/quinone metabolism; 1,4-dihydroxy-2-naphthoate biosynthesis; 1,4-dihydroxy-2-naphthoate from chorismate: step 4/7. Its pathway is quinol/quinone metabolism; menaquinone biosynthesis. Its function is as follows. Converts 2-succinyl-6-hydroxy-2,4-cyclohexadiene-1-carboxylate (SHCHC) to 2-succinylbenzoate (OSB). The sequence is that of o-succinylbenzoate synthase from Yersinia pseudotuberculosis serotype IB (strain PB1/+).